A 106-amino-acid chain; its full sequence is Transcription initiation factor IIA subunit 2 (106 aa).

The protein belongs to the TFIIA subunit 2 family. In terms of assembly, TFIIA is a heterodimer of the large unprocessed subunit 1 and a small subunit gamma. It was originally believed to be a heterotrimer of an alpha (p30), a beta (p20) and a gamma (p14) subunit. Forms a complex with Moonshiner/CG12721 and Trf2. As to expression, ubiquitous.

The protein resides in the nucleus. In terms of biological role, TFIIA is a component of the transcription machinery of RNA polymerase II and plays an important role in transcriptional activation. TFIIA in a complex with TBP mediates transcriptional activity. Part of a rhi-dependent transcription machinery that enables the generation of piRNA precursors from heterochromatin while maintaining the suppression of transposon-encoded promoters and enhancers. Forms a complex with Moonshiner/CG12721 and Trf2 which recruit transcriptional machinery to heterochromatin to initiate the bidirectional transcription of piRNA clusters, by interacting with the RDC (rhi, del and cuff) complex that binds to repressive H3K9me3 marks in the chromatin. This mechanism allows transcription to occur in piRNA clusters despite the lack of proper promoter elements and in the presence of the repressive H3K9me3 mark. The protein is Transcription initiation factor IIA subunit 2 (TfIIA-S) of Drosophila melanogaster (Fruit fly).